Reading from the N-terminus, the 312-residue chain is NADPH-dependent alpha-keto amide reductase (312 aa).

4 residues coordinate NADPH: Gly-25, Thr-26, Arg-27, and Asp-59. Residues Tyr-64 and His-122 each act as proton donor in the active site. The residue at position 123 (Ser-123) is a Phosphoserine. NADPH is bound by residues Ser-157, Gln-179, Ser-208, Leu-210, Thr-257, Thr-258, Ser-259, Ser-260, Lys-261, and Arg-264.

The protein belongs to the aldo/keto reductase family. Monomer. The N-terminus is blocked.

The protein resides in the cytoplasm. The protein localises to the nucleus. Functionally, reduces aromatic alpha-keto amides, aliphatic and aromatic alpha-keto esters, but not beta-keto esters. This Saccharomyces cerevisiae (strain ATCC 204508 / S288c) (Baker's yeast) protein is NADPH-dependent alpha-keto amide reductase.